We begin with the raw amino-acid sequence, 548 residues long: (S)-beta-macrocarpene synthase (548 aa).

2 residues coordinate Mg(2+): D302 and D306. Positions 302, 306, 443, and 446 each coordinate substrate. Positions 302-306 match the DDXXD motif motif; it reads DDTLD. Positions 446, 450, and 454 each coordinate Mg(2+).

It belongs to the terpene synthase family. As to quaternary structure, monomer. The cofactor is Mg(2+). It depends on Mn(2+) as a cofactor. As to expression, expressed in roots. Not detected in leaves, unless damaged by herbivory or infected by fungi.

The protein resides in the cytoplasm. The catalysed reaction is (S)-beta-bisabolene = (S)-beta-macrocarpene. The enzyme catalyses (2E,6E)-farnesyl diphosphate = (S)-beta-bisabolene + diphosphate. It carries out the reaction (2E)-geranyl diphosphate = (4S)-limonene + diphosphate. It catalyses the reaction (2E)-geranyl diphosphate = beta-myrcene + diphosphate. The catalysed reaction is (2E)-geranyl diphosphate = terpinolene + diphosphate. The enzyme catalyses (2E)-geranyl diphosphate + H2O = (S)-linalool + diphosphate. Its pathway is secondary metabolite biosynthesis; terpenoid biosynthesis. Functionally, involved in the biosynthesis of the bicyclic sesquiterpene (S)-beta-macrocarpene. Can use both geranyl diphosphate and farnesyl diphosphate as substrate, but not geranylgeranyl diphosphate. Produces mainly (S)-beta-macrocarpene, but also smaller amounts of beta-bisabolene and (E)-beta-farnesene when used with farnesyl diphosphate as substrate. In the presence of geranyl diphosphate, produces the acyclic monoterpenes beta-myrcene and linalool along with minor amounts of the cyclic compounds limonene, alpha-thujene, sabinene and alpha-terpinolene. May be involved in plant defense. This Zea mays (Maize) protein is (S)-beta-macrocarpene synthase.